A 497-amino-acid chain; its full sequence is uncharacterized protein (497 aa).

The interval 58–79 is disordered; the sequence is ISTRSFRNDGNDSDPQTLDPDA. The next 12 membrane-spanning stretches (helical) occupy residues 86-106, 120-140, 155-175, 180-200, 222-242, 258-278, 309-329, 348-368, 378-398, 407-427, 438-458, and 468-488; these read IAFV…ALPI, FSGL…YPML, FRPL…YSLA, WLYL…MFLY, LNIL…GLLA, VGSW…SIFF, FMLV…AGYQ, GNFL…STFL, MLYG…LDVL, FVLY…LISL, ILVG…GAIC, and VGFI…LLFL.

The protein belongs to the major facilitator superfamily.

It is found in the membrane. This is an uncharacterized protein from Schizosaccharomyces pombe (strain 972 / ATCC 24843) (Fission yeast).